Here is a 244-residue protein sequence, read N- to C-terminus: 5-oxoprolinase subunit A (244 aa).

The protein belongs to the LamB/PxpA family. As to quaternary structure, forms a complex composed of PxpA, PxpB and PxpC.

The catalysed reaction is 5-oxo-L-proline + ATP + 2 H2O = L-glutamate + ADP + phosphate + H(+). Catalyzes the cleavage of 5-oxoproline to form L-glutamate coupled to the hydrolysis of ATP to ADP and inorganic phosphate. The sequence is that of 5-oxoprolinase subunit A from Escherichia coli O17:K52:H18 (strain UMN026 / ExPEC).